The sequence spans 288 residues: Polyamine aminopropyltransferase (288 aa).

Positions 9–238 (ETLHDQFGQY…GIMTFAWATD (230 aa)) constitute a PABS domain. S-methyl-5'-thioadenosine is bound at residue Gln-33. 2 residues coordinate spermidine: His-64 and Asp-88. Residues Glu-108 and 140–141 (DG) each bind S-methyl-5'-thioadenosine. Catalysis depends on Asp-158, which acts as the Proton acceptor. 158–161 (DCTD) contacts spermidine. S-methyl-5'-thioadenosine is bound at residue Pro-165.

This sequence belongs to the spermidine/spermine synthase family. Homodimer or homotetramer.

The protein localises to the cytoplasm. The enzyme catalyses S-adenosyl 3-(methylsulfanyl)propylamine + putrescine = S-methyl-5'-thioadenosine + spermidine + H(+). It functions in the pathway amine and polyamine biosynthesis; spermidine biosynthesis; spermidine from putrescine: step 1/1. Functionally, catalyzes the irreversible transfer of a propylamine group from the amino donor S-adenosylmethioninamine (decarboxy-AdoMet) to putrescine (1,4-diaminobutane) to yield spermidine. The sequence is that of Polyamine aminopropyltransferase from Escherichia coli O17:K52:H18 (strain UMN026 / ExPEC).